We begin with the raw amino-acid sequence, 402 residues long: UPF0261 protein y4oU (402 aa).

This sequence belongs to the UPF0261 family.

The chain is UPF0261 protein y4oU from Sinorhizobium fredii (strain NBRC 101917 / NGR234).